Here is a 128-residue protein sequence, read N- to C-terminus: 3-aminoacrylate deaminase RutC (128 aa).

The protein belongs to the RutC family.

The catalysed reaction is (Z)-3-aminoacrylate + H2O + H(+) = 3-oxopropanoate + NH4(+). In terms of biological role, involved in pyrimidine catabolism. Catalyzes the deamination of 3-aminoacrylate to malonic semialdehyde, a reaction that can also occur spontaneously. RutC may facilitate the reaction and modulate the metabolic fitness, rather than catalyzing essential functions. The sequence is that of 3-aminoacrylate deaminase RutC from Agrobacterium fabrum (strain C58 / ATCC 33970) (Agrobacterium tumefaciens (strain C58)).